A 117-amino-acid polypeptide reads, in one-letter code: MGWSCIILFLVAAANGVHSQVQLQQPGTELVKPGASVKLSCKASGYTFTSYWMHWVKQRPGQGLEWIGNINPGNGGTNYNEKFKSKVTLTVDKSSSTAYTQLSSLTSEDSAVYYCAR.

The first 19 residues, M1–S19, serve as a signal peptide directing secretion. The interval Q20 to T49 is framework-1. C41 and C115 form a disulfide bridge. Positions S50 to H54 are complementarity-determining-1. The tract at residues W55–G68 is framework-2. The interval N69–S85 is complementarity-determining-2. Residues K86 to R117 are framework-3.

This is Ig heavy chain V region 23 from Mus musculus (Mouse).